A 160-amino-acid polypeptide reads, in one-letter code: Cytochrome c-type biogenesis protein CcmE (160 aa).

The Cytoplasmic segment spans residues 1 to 8 (MNPRRKNR). The chain crosses the membrane as a helical; Signal-anchor for type II membrane protein span at residues 9 to 29 (LILVMLVLVGLGLATALVMYA). The Periplasmic portion of the chain corresponds to 30–160 (LRSNIDLFYT…AVGDNSVRPS (131 aa)). Residues His130 and Tyr134 each coordinate heme. The span at 133–148 (KYTPPEIEDAMKKDHP) shows a compositional bias: basic and acidic residues. Residues 133-160 (KYTPPEIEDAMKKDHPAQAVGDNSVRPS) are disordered.

Belongs to the CcmE/CycJ family.

It localises to the cell inner membrane. Its function is as follows. Heme chaperone required for the biogenesis of c-type cytochromes. Transiently binds heme delivered by CcmC and transfers the heme to apo-cytochromes in a process facilitated by CcmF and CcmH. The chain is Cytochrome c-type biogenesis protein CcmE from Erwinia tasmaniensis (strain DSM 17950 / CFBP 7177 / CIP 109463 / NCPPB 4357 / Et1/99).